A 296-amino-acid polypeptide reads, in one-letter code: 4-hydroxybenzoate octaprenyltransferase (296 aa).

8 helical membrane-spanning segments follow: residues 28–48, 51–71, 102–122, 143–163, 174–194, 212–232, 233–253, and 274–294; these read IGTLLLLWPTYWALWLASDGI, LAVLAAFTIGTFLMRSAGCVI, LLLTAFLCLLAALCLIPLNHL, FFPIPQFYLGFAFSFGIPMAF, AWILFAANVLWTLAYDTVYAM, FGRYDIAAVMLCHGGFTLLMA, VLGAVIGAAWAYWTAIPIVLL, and FLANNRIGWVWFAAIFAHTFF.

This sequence belongs to the UbiA prenyltransferase family. Mg(2+) is required as a cofactor.

It localises to the cell inner membrane. The enzyme catalyses all-trans-octaprenyl diphosphate + 4-hydroxybenzoate = 4-hydroxy-3-(all-trans-octaprenyl)benzoate + diphosphate. The protein operates within cofactor biosynthesis; ubiquinone biosynthesis. Catalyzes the prenylation of para-hydroxybenzoate (PHB) with an all-trans polyprenyl group. Mediates the second step in the final reaction sequence of ubiquinone-8 (UQ-8) biosynthesis, which is the condensation of the polyisoprenoid side chain with PHB, generating the first membrane-bound Q intermediate 3-octaprenyl-4-hydroxybenzoate. The polypeptide is 4-hydroxybenzoate octaprenyltransferase (Neisseria gonorrhoeae (strain ATCC 700825 / FA 1090)).